The sequence spans 840 residues: DNA gyrase subunit A (840 aa).

Positions 51–516 (LPDVRDGFKP…VSSHIDDEDL (466 aa)) constitute a Topo IIA-type catalytic domain. Y139 serves as the catalytic O-(5'-phospho-DNA)-tyrosine intermediate. A GyrA-box motif is present at residues 543 to 549 (QRRGGVG).

The protein belongs to the type II topoisomerase GyrA/ParC subunit family. In terms of assembly, heterotetramer, composed of two GyrA and two GyrB chains. In the heterotetramer, GyrA contains the active site tyrosine that forms a transient covalent intermediate with DNA, while GyrB binds cofactors and catalyzes ATP hydrolysis.

The protein resides in the cytoplasm. The enzyme catalyses ATP-dependent breakage, passage and rejoining of double-stranded DNA.. Its function is as follows. A type II topoisomerase that negatively supercoils closed circular double-stranded (ds) DNA in an ATP-dependent manner to modulate DNA topology and maintain chromosomes in an underwound state. Negative supercoiling favors strand separation, and DNA replication, transcription, recombination and repair, all of which involve strand separation. Also able to catalyze the interconversion of other topological isomers of dsDNA rings, including catenanes and knotted rings. Type II topoisomerases break and join 2 DNA strands simultaneously in an ATP-dependent manner. The chain is DNA gyrase subunit A from Ureaplasma parvum serovar 3 (strain ATCC 700970).